The primary structure comprises 229 residues: Peroxiredoxin-like 2A (229 aa).

The interval 14-112 (MWSIGVGAFG…DELGVPLYAV (99 aa)) is thioredoxin fold. Active-site redox-active residues include C85 and C88.

Belongs to the peroxiredoxin-like PRXL2 family. PRXL2A subfamily. Expressed by the principal cells of the epididymis. Detected in the head region of epididymal sperm (at protein level). Expressed in bone marrow.

It localises to the cytoplasm. It is found in the secreted. Involved in redox regulation of the cell. Acts as an antioxidant. Inhibits TNFSF11-induced NFKB1 and JUN activation and osteoclast differentiation. May affect bone resorption and help to maintain bone mass. Acts as a negative regulator of macrophage-mediated inflammation by inhibiting macrophage production of inflammatory cytokines, probably through suppression of the MAPK signaling pathway. This Rattus norvegicus (Rat) protein is Peroxiredoxin-like 2A.